Reading from the N-terminus, the 418-residue chain is Serine--tRNA ligase (418 aa).

Residue 227–229 coordinates L-serine; sequence TSE. ATP contacts are provided by residues 258 to 260 and Val274; that span reads RRE. Glu281 lines the L-serine pocket. 345–348 lines the ATP pocket; it reads ELTS. Residue Thr380 participates in L-serine binding.

This sequence belongs to the class-II aminoacyl-tRNA synthetase family. Type-1 seryl-tRNA synthetase subfamily. In terms of assembly, homodimer. The tRNA molecule binds across the dimer.

The protein resides in the cytoplasm. The catalysed reaction is tRNA(Ser) + L-serine + ATP = L-seryl-tRNA(Ser) + AMP + diphosphate + H(+). The enzyme catalyses tRNA(Sec) + L-serine + ATP = L-seryl-tRNA(Sec) + AMP + diphosphate + H(+). Its pathway is aminoacyl-tRNA biosynthesis; selenocysteinyl-tRNA(Sec) biosynthesis; L-seryl-tRNA(Sec) from L-serine and tRNA(Sec): step 1/1. Its function is as follows. Catalyzes the attachment of serine to tRNA(Ser). Is also able to aminoacylate tRNA(Sec) with serine, to form the misacylated tRNA L-seryl-tRNA(Sec), which will be further converted into selenocysteinyl-tRNA(Sec). In Rhodococcus opacus (strain B4), this protein is Serine--tRNA ligase.